Here is a 37-residue protein sequence, read N- to C-terminus: Omega/M-ectatotoxin-Et1a subunit A (37 aa).

C12 and C34 form a disulfide bridge.

It belongs to the ectatomin family. Ectatomin-Et subfamily. As to quaternary structure, heterodimer of an A and a B chain; disulfide-linked. As to expression, expressed by the venom gland.

The protein resides in the secreted. It localises to the target cell membrane. Functionally, algogenic for animals, human and insects. At high concentrations (0.5-1 uM), it acts as a pore-forming protein that forms nonselective cation channels both in cell and artificial membranes. It is weakly selective for cation over anions channel conductance is identical in both directions. At lower concentrations (1-10 nM), this heterodimer inhibits cardiac L-type calcium currents in isolated rat cardiac ventricular myocytes. This chain is Omega/M-ectatotoxin-Et1a subunit A, found in Ectatomma tuberculatum (Selva ant).